The sequence spans 1069 residues: ISWI chromatin-remodeling complex ATPase CHR17 (1069 aa).

Residues 1–10 (MARASKREVS) show a composition bias toward basic and acidic residues. 2 disordered regions span residues 1–93 (MARA…KEMQ) and 136–168 (FAKSDPSPSQKKGKGRGRHSSKLTEEEEDEECL). Acidic residues-rich tracts occupy residues 15 to 37 (YSSEEEEQVNDQANVEEDDDELE) and 45 to 78 (SDEEDVAPDEAPVSDDEVVPVEDDAEEDEEDEEK). Positions 79-93 (AEISKREKARLKEMQ) are enriched in basic and acidic residues. The span at 146–156 (KKGKGRGRHSS) shows a compositional bias: basic residues. A Helicase ATP-binding domain is found at 206–371 (IRLYENGING…WALLNFLLPE (166 aa)). 219–226 (DEMGLGKT) serves as a coordination point for ATP. The DEAH box motif lies at 322–325 (DEAH). The region spanning 499–650 (LLDKLLPKLK…ALVIQQGRLA (152 aa)) is the Helicase C-terminal domain. 2 SANT domains span residues 845 to 897 (EGFS…VRYK) and 946 to 1007 (QNKG…DTLI). Positions 1016–1069 (EFDERERQARKEKKLSKSATPSKRPSGRQANESPSSLLKKRKQLSMDDYGKRRK) are disordered. The span at 1032 to 1051 (KSATPSKRPSGRQANESPSS) shows a compositional bias: polar residues. The segment covering 1059 to 1069 (LSMDDYGKRRK) has biased composition (basic and acidic residues).

The protein belongs to the SNF2/RAD54 helicase family. ISWI subfamily. In terms of assembly, interacts with RLT1. Binds to FGT1. As to expression, highly expressed in growing tissues such as inflorescence and flower meristems, young leaves and floral organs. Expressed in roots, rosette and cauline leaves, stems, flowers, inflorescences and siliques.

The protein localises to the nucleus. Possesses intrinsic ATP-dependent nucleosome-remodeling activity. Constitutes the catalytic subunit of several complexes capable of forming ordered nucleosome arrays on chromatin. Involved in the formation of nucleosome distribution patterns. Required for the maintenance of the plant vegetative phase. In association with RLT1 or RLT2 may prevent the early activation of the vegetative-to-reproductive transition by regulating key genes that contribute to flower timing, such as FT, SEP1, SEP3, AGL8/FUL, SOC1 and FLC. Necessary to acquire heat stress (HS) memory. This is ISWI chromatin-remodeling complex ATPase CHR17 from Arabidopsis thaliana (Mouse-ear cress).